Here is a 140-residue protein sequence, read N- to C-terminus: Protein E6 (140 aa).

Zinc fingers lie at residues 28 to 64 and 101 to 137; these read CNFC…CRYC and CHHC…CRQC.

This sequence belongs to the papillomaviridae E6 protein family. Forms homodimers. Interacts with ubiquitin-protein ligase UBE3A/E6-AP; this interaction stimulates UBE3A ubiquitin activity. Interacts with host BAK1.

The protein localises to the host cytoplasm. Its subcellular location is the host nucleus. Plays a major role in the induction and maintenance of cellular transformation. E6 associates with host UBE3A/E6-AP ubiquitin-protein ligase and modulates its activity. Protects host keratinocytes from apoptosis by mediating the degradation of host BAK1. May also inhibit host immune response. This is Protein E6 from Human papillomavirus 24.